Reading from the N-terminus, the 214-residue chain is Octanoyltransferase (214 aa).

In terms of domain architecture, BPL/LPL catalytic spans 34–214 (GLQKELVWLL…KFNEIFSSFN (181 aa)). Substrate contacts are provided by residues 73–80 (RGGKYTYH), 145–147 (AFG), and 158–160 (GVS). Cys176 acts as the Acyl-thioester intermediate in catalysis.

It belongs to the LipB family.

The protein localises to the cytoplasm. The enzyme catalyses octanoyl-[ACP] + L-lysyl-[protein] = N(6)-octanoyl-L-lysyl-[protein] + holo-[ACP] + H(+). It functions in the pathway protein modification; protein lipoylation via endogenous pathway; protein N(6)-(lipoyl)lysine from octanoyl-[acyl-carrier-protein]: step 1/2. Functionally, catalyzes the transfer of endogenously produced octanoic acid from octanoyl-acyl-carrier-protein onto the lipoyl domains of lipoate-dependent enzymes. Lipoyl-ACP can also act as a substrate although octanoyl-ACP is likely to be the physiological substrate. The protein is Octanoyltransferase of Ehrlichia canis (strain Jake).